A 571-amino-acid chain; its full sequence is Proline--tRNA ligase (571 aa).

Belongs to the class-II aminoacyl-tRNA synthetase family. ProS type 1 subfamily. In terms of assembly, homodimer.

It localises to the cytoplasm. It carries out the reaction tRNA(Pro) + L-proline + ATP = L-prolyl-tRNA(Pro) + AMP + diphosphate. Catalyzes the attachment of proline to tRNA(Pro) in a two-step reaction: proline is first activated by ATP to form Pro-AMP and then transferred to the acceptor end of tRNA(Pro). As ProRS can inadvertently accommodate and process non-cognate amino acids such as alanine and cysteine, to avoid such errors it has two additional distinct editing activities against alanine. One activity is designated as 'pretransfer' editing and involves the tRNA(Pro)-independent hydrolysis of activated Ala-AMP. The other activity is designated 'posttransfer' editing and involves deacylation of mischarged Ala-tRNA(Pro). The misacylated Cys-tRNA(Pro) is not edited by ProRS. This is Proline--tRNA ligase from Pseudomonas syringae pv. syringae (strain B728a).